Consider the following 124-residue polypeptide: Large ribosomal subunit protein bL12 (124 aa).

This sequence belongs to the bacterial ribosomal protein bL12 family. In terms of assembly, homodimer. Part of the ribosomal stalk of the 50S ribosomal subunit. Forms a multimeric L10(L12)X complex, where L10 forms an elongated spine to which 2 to 4 L12 dimers bind in a sequential fashion. Binds GTP-bound translation factors.

Functionally, forms part of the ribosomal stalk which helps the ribosome interact with GTP-bound translation factors. Is thus essential for accurate translation. The chain is Large ribosomal subunit protein bL12 from Desulfitobacterium hafniense (strain DSM 10664 / DCB-2).